The chain runs to 355 residues: MTLIVEAKQRLGAFSLDAAFTSEGGVTAFFGRSGSGKTSLIRIIAGLARPDGGRVVLDGERLTETTAGIFVPKHRRRFGYVFQEARLFPHLSVRANLSYGRWFAPKAGRSESFDHIIDLLGIETLLERSPAKLSGGEKQRVAIGRALLSSPRLLLMDEPLAALDEARKAEILPYLERLRDETEIPIVYVSHSIAEVARLANQVVVLSDGKVQATGPAVDILSRPSAAADRKEAGALLEGTVESFDARHRLSTVTLKSSQLHIPSAVLTPGRPVRIRIPSRDVMLATARPEGLSALNILEGRIEAISPGEDGTVEIRIDCAGDAILSRITALSCERLDLRPGKTVFAIIKTVALEG.

In terms of domain architecture, ABC transporter spans 1–233; the sequence is MTLIVEAKQR…PSAAADRKEA (233 aa). 31-38 provides a ligand contact to ATP; sequence GRSGSGKT. One can recognise a Mop domain in the interval 291–355; it reads GLSALNILEG…AIIKTVALEG (65 aa).

Belongs to the ABC transporter superfamily. Molybdate importer (TC 3.A.1.8) family. As to quaternary structure, the complex is composed of two ATP-binding proteins (ModC), two transmembrane proteins (ModB) and a solute-binding protein (ModA).

The protein localises to the cell inner membrane. The catalysed reaction is molybdate(out) + ATP + H2O = molybdate(in) + ADP + phosphate + H(+). Its function is as follows. Part of the ABC transporter complex ModABC involved in molybdenum import. Responsible for energy coupling to the transport system. In Rhizobium etli (strain ATCC 51251 / DSM 11541 / JCM 21823 / NBRC 15573 / CFN 42), this protein is Molybdenum import ATP-binding protein ModC.